A 232-amino-acid chain; its full sequence is Glutathione S-transferase U10 (232 aa).

In terms of domain architecture, GST N-terminal spans 6–85 (SKVILHGTWI…YIDETWTNSP (80 aa)). Residues 16–17 (ST), 42–43 (NK), 56–57 (KI), and 69–70 (ES) each bind glutathione. In terms of domain architecture, GST C-terminal spans 91–226 (DPYERAQVRF…FIQKYRQKCL (136 aa)).

Belongs to the GST superfamily. Tau family.

It localises to the cytoplasm. It is found in the cytosol. The catalysed reaction is RX + glutathione = an S-substituted glutathione + a halide anion + H(+). In terms of biological role, may be involved in the conjugation of reduced glutathione to a wide number of exogenous and endogenous hydrophobic electrophiles and have a detoxification role against certain herbicides. In Arabidopsis thaliana (Mouse-ear cress), this protein is Glutathione S-transferase U10 (GSTU10).